Here is a 674-residue protein sequence, read N- to C-terminus: Linear primary-alkylsulfatase (674 aa).

The signal sequence occupies residues 1–41; sequence MKLNALSTATHGSRSSPVKLWKFSTSFLLAASIIVSGQSWA. His-192, His-194, Asp-196, His-197, Glu-303, and Glu-322 together coordinate Zn(2+). Sulfate contacts are provided by residues 330–335 and Arg-340; that span reads NTYSLR. His-367 contributes to the Zn(2+) binding site. Tyr-428 is a binding site for sulfate.

It belongs to the metallo-beta-lactamase superfamily. Type III sulfatase family. As to quaternary structure, homodimer. The cofactor is Zn(2+).

It localises to the periplasm. The catalysed reaction is a primary linear alkyl sulfate ester + H2O = a primary alcohol + sulfate + H(+). Its activity is regulated as follows. Inhibited by EDTA. Slightly activated in the presence of Ca(2+). Functionally, alkylsulfatase that cleaves primary alkyl sulfates such as sodium octyl sulfate and the widely used detergent sodium dodecyl sulfate (SDS). The sequence is that of Linear primary-alkylsulfatase from Pseudomonas sp.